The chain runs to 335 residues: MATFVSELEAAKKNLSEALGDNVKQYWANLKLWFKQKISKEEFDLEAHRLLTQDNVHSHNDFLLAILTRCQILVSTPEGAGSLPWTGGSAAKPGKPKGKKKLSSVRQKFDHRFQPQNPLSGAQQFVAKEPQGDDDLKLCSHTMMLPTRGQLEGRMIVTAYEHGLDNVTEEAVSAVVYAVENHLKDILTSVVSRRKAYRVRDGHFKYAFGSNVTPQPYLKNSVVAYNNLVEGPPAFSAPCANQSPASQPHPDDAEQQAAFLLACSGDTLPASLPPVNMYDLFEALQVHREVIPTHTVYALNIERIIMKLWHPNHEELQQDKVHRQRLAAKEGLLLC.

Belongs to the TADA1 family. Component of the STAGA transcription coactivator-HAT complex, at least composed of SUPT3H, GCN5L2, TAF5L, TAF6L, SUPT7L, TADA3L, TAD1L, TAF10, TAF12, TRRAP and TAF9.

The protein resides in the nucleus. Probably involved in transcriptional regulation. This Mus musculus (Mouse) protein is Transcriptional adapter 1 (Tada1).